The following is a 316-amino-acid chain: UPF0613 protein PB24D3.06c (316 aa).

This sequence belongs to the UPF0613 family.

The protein localises to the cytoplasm. The protein resides in the nucleus. This Schizosaccharomyces pombe (strain 972 / ATCC 24843) (Fission yeast) protein is UPF0613 protein PB24D3.06c.